An 874-amino-acid polypeptide reads, in one-letter code: Alanine--tRNA ligase (874 aa).

4 residues coordinate Zn(2+): histidine 564, histidine 568, cysteine 665, and histidine 669.

The protein belongs to the class-II aminoacyl-tRNA synthetase family. Requires Zn(2+) as cofactor.

It localises to the cytoplasm. It catalyses the reaction tRNA(Ala) + L-alanine + ATP = L-alanyl-tRNA(Ala) + AMP + diphosphate. Catalyzes the attachment of alanine to tRNA(Ala) in a two-step reaction: alanine is first activated by ATP to form Ala-AMP and then transferred to the acceptor end of tRNA(Ala). Also edits incorrectly charged Ser-tRNA(Ala) and Gly-tRNA(Ala) via its editing domain. The chain is Alanine--tRNA ligase from Polaromonas naphthalenivorans (strain CJ2).